Consider the following 161-residue polypeptide: S-ribosylhomocysteine lyase (161 aa).

Residues His58, His62, and Cys128 each coordinate Fe cation.

Belongs to the LuxS family. As to quaternary structure, homodimer. The cofactor is Fe cation.

The catalysed reaction is S-(5-deoxy-D-ribos-5-yl)-L-homocysteine = (S)-4,5-dihydroxypentane-2,3-dione + L-homocysteine. Its function is as follows. Involved in the synthesis of autoinducer 2 (AI-2) which is secreted by bacteria and is used to communicate both the cell density and the metabolic potential of the environment. The regulation of gene expression in response to changes in cell density is called quorum sensing. Catalyzes the transformation of S-ribosylhomocysteine (RHC) to homocysteine (HC) and 4,5-dihydroxy-2,3-pentadione (DPD). This chain is S-ribosylhomocysteine lyase, found in Bifidobacterium adolescentis (strain ATCC 15703 / DSM 20083 / NCTC 11814 / E194a).